A 204-amino-acid polypeptide reads, in one-letter code: Glycerol-3-phosphate acyltransferase (204 aa).

5 consecutive transmembrane segments (helical) span residues 8–28 (ILIF…CYIF), 53–73 (VPAA…VVIA), 81–101 (FITA…IFFG), 116–136 (FGFS…VAII), and 155–175 (VIFT…IIIL).

The protein belongs to the PlsY family. As to quaternary structure, probably interacts with PlsX.

It localises to the cell inner membrane. It carries out the reaction an acyl phosphate + sn-glycerol 3-phosphate = a 1-acyl-sn-glycero-3-phosphate + phosphate. It participates in lipid metabolism; phospholipid metabolism. Catalyzes the transfer of an acyl group from acyl-phosphate (acyl-PO(4)) to glycerol-3-phosphate (G3P) to form lysophosphatidic acid (LPA). This enzyme utilizes acyl-phosphate as fatty acyl donor, but not acyl-CoA or acyl-ACP. This is Glycerol-3-phosphate acyltransferase from Francisella tularensis subsp. holarctica (strain FTNF002-00 / FTA).